Consider the following 216-residue polypeptide: Glycerol-3-phosphate acyltransferase 3 (216 aa).

The next 5 helical transmembrane spans lie at 6-26 (LLLV…YLVS), 58-78 (LVAS…GLVI), 92-112 (LLFA…WPVF), 125-145 (FGGM…VLII), and 158-178 (ITGV…SGFP).

This sequence belongs to the PlsY family. As to quaternary structure, probably interacts with PlsX.

It is found in the cell membrane. It carries out the reaction an acyl phosphate + sn-glycerol 3-phosphate = a 1-acyl-sn-glycero-3-phosphate + phosphate. It functions in the pathway lipid metabolism; phospholipid metabolism. Functionally, catalyzes the transfer of an acyl group from acyl-phosphate (acyl-PO(4)) to glycerol-3-phosphate (G3P) to form lysophosphatidic acid (LPA). This enzyme utilizes acyl-phosphate as fatty acyl donor, but not acyl-CoA or acyl-ACP. The polypeptide is Glycerol-3-phosphate acyltransferase 3 (Dehalococcoides mccartyi (strain CBDB1)).